A 287-amino-acid polypeptide reads, in one-letter code: Homoserine kinase (287 aa).

Residue 78–88 participates in ATP binding; the sequence is PLAHGLGSSSS.

Belongs to the GHMP kinase family. Homoserine kinase subfamily.

It localises to the cytoplasm. The catalysed reaction is L-homoserine + ATP = O-phospho-L-homoserine + ADP + H(+). It functions in the pathway amino-acid biosynthesis; L-threonine biosynthesis; L-threonine from L-aspartate: step 4/5. Its function is as follows. Catalyzes the ATP-dependent phosphorylation of L-homoserine to L-homoserine phosphate. The protein is Homoserine kinase of Lactobacillus acidophilus (strain ATCC 700396 / NCK56 / N2 / NCFM).